Consider the following 200-residue polypeptide: GTP-dependent dephospho-CoA kinase (200 aa).

GTP contacts are provided by Asp56, Val57, Val58, Asp75, and Glu132.

It belongs to the GTP-dependent DPCK family.

The enzyme catalyses 3'-dephospho-CoA + GTP = GDP + CoA + H(+). The protein operates within cofactor biosynthesis; coenzyme A biosynthesis. Its function is as follows. Catalyzes the GTP-dependent phosphorylation of the 3'-hydroxyl group of dephosphocoenzyme A to form coenzyme A (CoA). In Caldivirga maquilingensis (strain ATCC 700844 / DSM 13496 / JCM 10307 / IC-167), this protein is GTP-dependent dephospho-CoA kinase.